Consider the following 503-residue polypeptide: MVSAAASAGRLGSALPFLLVLLDLQYQGAECGINAEVEKQLEMGKKLLAAGQLADALSHFHAAIEGDSDNYIAYYRRATVYLAMGKSKAAIRDLSKVVELKQDFTSRLQRGHLLLKQGKFDEAEDDFKNVLKSNPSNNEEKEAQTQLTKSDELQRLYSQALSAYRQEDYEAAIPLLDEILAVCVWDAELRELRAECYIKEGEPSKAISDLKAAAKLKSDNTEAFYKISRIYYQLGDHELSLSEVRECLKLDQDHKQCFSLYKQVKKLNKQIESAEEFIREGRYEDAISKYDSVMKTEPDVPVYATRAKERICHCLSKNQQATEAITVCTQVLQLEPTNVNALKDRAEAYLLEDLYEEAIKDYETAQANSENDQQIREGLERAQRMLKQSQKRDYYKILGVKRNARKQEIIKAYRKLASQWHPDNFQSEEEKKKAEKKFIDIAAAKEVLTDPEMRRKFDAGEDPLDAESQQGGGNPFHRNWNTWQGFNPFGSGGGPFTFKFHFS.

Residues 1-31 (MVSAAASAGRLGSALPFLLVLLDLQYQGAEC) form the signal peptide. TPR repeat units lie at residues 37-70 (VEKQ…DSDN), 71-104 (YIAY…KQDF), 105-137 (TSRL…NPSN), 153-186 (LQRL…CVWD), 187-220 (AELR…KSDN), 221-254 (TEAF…DQDH), 267-300 (LNKQ…EPDV), 305-338 (TRAK…EPTN), and 339-372 (VNAL…SEND). Cysteine 247 and cysteine 257 form a disulfide bridge. The cysteines at positions 312 and 328 are disulfide-linked. Residues 374–392 (QIREGLERAQRMLKQSQKR) form a flexible linker region. The J domain maps to 393–461 (DYYKILGVKR…EMRRKFDAGE (69 aa)).

The protein resides in the endoplasmic reticulum. May be involved in the unfolded protein response (UPR) during ER stress. The polypeptide is DnaJ homolog subfamily C member 3 (DNAJC3) (Gallus gallus (Chicken)).